The primary structure comprises 519 residues: Probable pectinesterase/pectinesterase inhibitor 36 (519 aa).

The signal sequence occupies residues 1-25; the sequence is MSTFVKVTDLITIMFFLAIAAVITA. Positions 27–141 are pectinesterase inhibitor 36; it reads NTAELDVLEM…TFVLHEALAF (115 aa). Asparagine 92 and asparagine 130 each carry an N-linked (GlcNAc...) asparagine glycan. Residues 147–196 form a disordered region; it reads GHMKKRLHGPARQGHGPTRPKHRPTRPNHGPGRSHHGPSRPNQNGGMLVS. The segment covering 164–184 has biased composition (basic residues); sequence TRPKHRPTRPNHGPGRSHHGP. Residues 186 to 196 show a composition bias toward polar residues; the sequence is RPNQNGGMLVS. Positions 205–505 are pectinesterase 36; sequence DFVVARDGSA…FTVSRFIQGD (301 aa). Substrate contacts are provided by threonine 283 and glutamine 313. Catalysis depends on aspartate 336, which acts as the Proton donor; for pectinesterase activity. Aspartate 357 (nucleophile; for pectinesterase activity) is an active-site residue. Positions 425 and 427 each coordinate substrate.

The protein in the N-terminal section; belongs to the PMEI family. It in the C-terminal section; belongs to the pectinesterase family. In terms of tissue distribution, expressed in siliques.

It localises to the secreted. The protein localises to the cell wall. The enzyme catalyses [(1-&gt;4)-alpha-D-galacturonosyl methyl ester](n) + n H2O = [(1-&gt;4)-alpha-D-galacturonosyl](n) + n methanol + n H(+). It functions in the pathway glycan metabolism; pectin degradation; 2-dehydro-3-deoxy-D-gluconate from pectin: step 1/5. Its function is as follows. Acts in the modification of cell walls via demethylesterification of cell wall pectin. The sequence is that of Probable pectinesterase/pectinesterase inhibitor 36 (PME36) from Arabidopsis thaliana (Mouse-ear cress).